We begin with the raw amino-acid sequence, 387 residues long: 1,3-propanediol dehydrogenase (387 aa).

Belongs to the iron-containing alcohol dehydrogenase family. As to quaternary structure, homooctamer. Fe cation is required as a cofactor.

The catalysed reaction is propane-1,3-diol + NAD(+) = 3-hydroxypropanal + NADH + H(+). The chain is 1,3-propanediol dehydrogenase (dhaT) from Klebsiella pneumoniae.